We begin with the raw amino-acid sequence, 386 residues long: Putative F-box/kelch-repeat protein At3g17280 (386 aa).

Residues 1-48 form the F-box domain; that stretch reads MTTISDLPYDLLPEILSRLPTKSIPKLKTTCKKWYALFKDPKFVEKKL. Kelch repeat units follow at residues 155-203 and 340-386; these read SYKI…LKES and RIYI…IVEV.

This is Putative F-box/kelch-repeat protein At3g17280 from Arabidopsis thaliana (Mouse-ear cress).